The primary structure comprises 173 residues: FMN reductase (NADH) RutF 2 (173 aa).

The protein belongs to the non-flavoprotein flavin reductase family. RutF subfamily.

The catalysed reaction is FMNH2 + NAD(+) = FMN + NADH + 2 H(+). In terms of biological role, catalyzes the reduction of FMN to FMNH2 which is used to reduce pyrimidine by RutA via the Rut pathway. This chain is FMN reductase (NADH) RutF 2, found in Rhizobium rhizogenes (strain K84 / ATCC BAA-868) (Agrobacterium radiobacter).